A 252-amino-acid chain; its full sequence is Chitooligosaccharide deacetylase (252 aa).

Histidine 61 and histidine 125 together coordinate Mg(2+).

This sequence belongs to the YdjC deacetylase family. ChbG subfamily. As to quaternary structure, homodimer. Requires Mg(2+) as cofactor.

Its subcellular location is the cytoplasm. It catalyses the reaction N,N'-diacetylchitobiose + H2O = N-acetyl-beta-D-glucosaminyl-(1-&gt;4)-D-glucosamine + acetate. It carries out the reaction diacetylchitobiose-6'-phosphate + H2O = N'-monoacetylchitobiose-6'-phosphate + acetate. It functions in the pathway glycan degradation; chitin degradation. Functionally, involved in the degradation of chitin. ChbG is essential for growth on the acetylated chitooligosaccharides chitobiose and chitotriose but is dispensable for growth on cellobiose and chitosan dimer, the deacetylated form of chitobiose. Deacetylation of chitobiose-6-P and chitotriose-6-P is necessary for both the activation of the chb promoter by the regulatory protein ChbR and the hydrolysis of phosphorylated beta-glucosides by the phospho-beta-glucosidase ChbF. Catalyzes the removal of only one acetyl group from chitobiose-6-P to yield monoacetylchitobiose-6-P, the inducer of ChbR and the substrate of ChbF. The protein is Chitooligosaccharide deacetylase of Shigella flexneri serotype 5b (strain 8401).